Reading from the N-terminus, the 103-residue chain is MYAVIKTGGKQYRVASGEKIKVEQIAADVGQEIVIDQVLAVGNGSEIKIGTPLVSGATVTVTVLSHGKHDKVGIFKMRRRKHYQKRQGHRQQFTELQIGAIAG.

This sequence belongs to the bacterial ribosomal protein bL21 family. In terms of assembly, part of the 50S ribosomal subunit. Contacts protein L20.

Functionally, this protein binds to 23S rRNA in the presence of protein L20. The sequence is that of Large ribosomal subunit protein bL21 from Variovorax paradoxus (strain S110).